The sequence spans 341 residues: Delta(1)-pyrroline-2-carboxylate reductase (341 aa).

Catalysis depends on serine 47, which acts as the Charge relay system. Histidine 48 acts as the Proton donor in catalysis. Arginine 52 contributes to the substrate binding site. Residue 120–124 coordinates NADP(+); it reads HFSAL. Residue threonine 160 coordinates substrate. NADP(+) is bound at residue 178 to 180; sequence DFA. A substrate-binding site is contributed by 186 to 187; it reads RG. The active-site Charge relay system is the glutamate 188. Residues 229–230 and 305–311 each bind NADP(+); these read HK and RLPSERR.

It belongs to the LDH2/MDH2 oxidoreductase family. As to quaternary structure, homodimer.

It catalyses the reaction L-proline + NAD(+) = 1-pyrroline-2-carboxylate + NADH + H(+). The enzyme catalyses L-proline + NADP(+) = 1-pyrroline-2-carboxylate + NADPH + H(+). In terms of biological role, catalyzes the reduction of Delta(1)-pyrroline-2-carboxylate (Pyr2C) to L-proline, using NADPH as the electron donor. Is likely involved in a degradation pathway that converts cis- and trans-3-hydroxy-L-proline (c3LHyp and t3LHyp) to L-proline, which would allow S.novella to grow on c3LHyp or t3LHyp as a sole carbon source. In Ancylobacter novellus (strain ATCC 8093 / DSM 506 / JCM 20403 / CCM 1077 / IAM 12100 / NBRC 12443 / NCIMB 10456) (Starkeya novella), this protein is Delta(1)-pyrroline-2-carboxylate reductase.